A 196-amino-acid polypeptide reads, in one-letter code: MASVLNEQSLQQLFISARTHHTWKNTPVSDEQLKQIYDLFKYAPTSVNCSPARIVFVKSAAEKERLLQCVNPGNVEKTKNAPVTAIIGMDLDFYEQLPKLFPHVDAKSWFVGKDTFIEQTAFRNSSLQGAYLILAARAIGLDCGPMSGFDADKVNAAFFPDGRVKVNFLVNIGYGDESSLMPRQPRPSFDEACRIL.

Belongs to the nitroreductase family. HadB/RutE subfamily. Requires FMN as cofactor.

In Polynucleobacter asymbioticus (strain DSM 18221 / CIP 109841 / QLW-P1DMWA-1) (Polynucleobacter necessarius subsp. asymbioticus), this protein is Putative NADH dehydrogenase/NAD(P)H nitroreductase Pnuc_0932.